Here is a 1578-residue protein sequence, read N- to C-terminus: Pentafunctional AROM polypeptide (1578 aa).

Residues 1–384 are 3-dehydroquinate synthase; sequence MAEPTKIKIL…YEPKASVVPN (384 aa). Residues 44 to 46, 81 to 84, 114 to 116, and aspartate 119 each bind NAD(+); these read DTN, EVSK, and GGV. Arginine 130 lines the 7-phospho-2-dehydro-3-deoxy-D-arabino-heptonate pocket. 139 to 140 is a binding site for NAD(+); sequence TT. Residues aspartate 146 and lysine 152 each contribute to the 7-phospho-2-dehydro-3-deoxy-D-arabino-heptonate site. Lysine 161 contacts NAD(+). Asparagine 162 is a 7-phospho-2-dehydro-3-deoxy-D-arabino-heptonate binding site. Residues 179–182 and asparagine 190 contribute to the NAD(+) site; that span reads FLET. Glutamate 194 is a Zn(2+) binding site. Residues 194 to 197 and lysine 250 each bind 7-phospho-2-dehydro-3-deoxy-D-arabino-heptonate; that span reads EVIK. Glutamate 260 functions as the Proton acceptor; for 3-dehydroquinate synthase activity in the catalytic mechanism. 7-phospho-2-dehydro-3-deoxy-D-arabino-heptonate-binding positions include 264 to 268 and histidine 271; that span reads RNLLN. Residue histidine 271 coordinates Zn(2+). The Proton acceptor; for 3-dehydroquinate synthase activity role is filled by histidine 275. 7-phospho-2-dehydro-3-deoxy-D-arabino-heptonate contacts are provided by histidine 287 and lysine 356. Histidine 287 contacts Zn(2+). The segment at 397–842 is EPSP synthase; that stretch reads VHPGVEPASN…WDTLRQKFSA (446 aa). The For EPSP synthase activity role is filled by cysteine 824. Residues 864 to 1055 are shikimate kinase; sequence TASVFIIGMR…KRKKHSFFVS (192 aa). Position 871–878 (871–878) interacts with ATP; the sequence is GMRGAGKT. Residues 1056–1276 are 3-dehydroquinase; it reads LTLPDLRTAG…AAPGQLSATE (221 aa). Histidine 1179 acts as the Proton acceptor; for 3-dehydroquinate dehydratase activity in catalysis. Lysine 1207 (schiff-base intermediate with substrate; for 3-dehydroquinate dehydratase activity) is an active-site residue. Positions 1289–1578 are shikimate dehydrogenase; the sequence is QKKFAVFGTP…EDARAAVLSS (290 aa).

It in the N-terminal section; belongs to the sugar phosphate cyclases superfamily. Dehydroquinate synthase family. The protein in the 2nd section; belongs to the EPSP synthase family. This sequence in the 3rd section; belongs to the shikimate kinase family. In the 4th section; belongs to the type-I 3-dehydroquinase family. It in the C-terminal section; belongs to the shikimate dehydrogenase family. In terms of assembly, homodimer. Zn(2+) serves as cofactor.

The protein resides in the cytoplasm. It catalyses the reaction 7-phospho-2-dehydro-3-deoxy-D-arabino-heptonate = 3-dehydroquinate + phosphate. It carries out the reaction 3-dehydroquinate = 3-dehydroshikimate + H2O. The enzyme catalyses shikimate + NADP(+) = 3-dehydroshikimate + NADPH + H(+). The catalysed reaction is shikimate + ATP = 3-phosphoshikimate + ADP + H(+). It catalyses the reaction 3-phosphoshikimate + phosphoenolpyruvate = 5-O-(1-carboxyvinyl)-3-phosphoshikimate + phosphate. The protein operates within metabolic intermediate biosynthesis; chorismate biosynthesis; chorismate from D-erythrose 4-phosphate and phosphoenolpyruvate: step 2/7. It participates in metabolic intermediate biosynthesis; chorismate biosynthesis; chorismate from D-erythrose 4-phosphate and phosphoenolpyruvate: step 3/7. Its pathway is metabolic intermediate biosynthesis; chorismate biosynthesis; chorismate from D-erythrose 4-phosphate and phosphoenolpyruvate: step 4/7. It functions in the pathway metabolic intermediate biosynthesis; chorismate biosynthesis; chorismate from D-erythrose 4-phosphate and phosphoenolpyruvate: step 5/7. The protein operates within metabolic intermediate biosynthesis; chorismate biosynthesis; chorismate from D-erythrose 4-phosphate and phosphoenolpyruvate: step 6/7. Functionally, the AROM polypeptide catalyzes 5 consecutive enzymatic reactions in prechorismate polyaromatic amino acid biosynthesis. The sequence is that of Pentafunctional AROM polypeptide from Aspergillus flavus (strain ATCC 200026 / FGSC A1120 / IAM 13836 / NRRL 3357 / JCM 12722 / SRRC 167).